The primary structure comprises 333 residues: 4-hydroxy-3-methylbut-2-enyl diphosphate reductase (333 aa).

C20 lines the [4Fe-4S] cluster pocket. Residues H49 and H82 each contribute to the (2E)-4-hydroxy-3-methylbut-2-enyl diphosphate site. Dimethylallyl diphosphate contacts are provided by H49 and H82. H49 and H82 together coordinate isopentenyl diphosphate. C104 serves as a coordination point for [4Fe-4S] cluster. (2E)-4-hydroxy-3-methylbut-2-enyl diphosphate is bound at residue H132. H132 serves as a coordination point for dimethylallyl diphosphate. An isopentenyl diphosphate-binding site is contributed by H132. E134 acts as the Proton donor in catalysis. Residue T172 participates in (2E)-4-hydroxy-3-methylbut-2-enyl diphosphate binding. [4Fe-4S] cluster is bound at residue C202. Residues S230, S231, N232, and S274 each coordinate (2E)-4-hydroxy-3-methylbut-2-enyl diphosphate. Residues S230, S231, N232, and S274 each contribute to the dimethylallyl diphosphate site. Isopentenyl diphosphate-binding residues include S230, S231, N232, and S274.

Belongs to the IspH family. The cofactor is [4Fe-4S] cluster.

It carries out the reaction isopentenyl diphosphate + 2 oxidized [2Fe-2S]-[ferredoxin] + H2O = (2E)-4-hydroxy-3-methylbut-2-enyl diphosphate + 2 reduced [2Fe-2S]-[ferredoxin] + 2 H(+). It catalyses the reaction dimethylallyl diphosphate + 2 oxidized [2Fe-2S]-[ferredoxin] + H2O = (2E)-4-hydroxy-3-methylbut-2-enyl diphosphate + 2 reduced [2Fe-2S]-[ferredoxin] + 2 H(+). It participates in isoprenoid biosynthesis; dimethylallyl diphosphate biosynthesis; dimethylallyl diphosphate from (2E)-4-hydroxy-3-methylbutenyl diphosphate: step 1/1. Its pathway is isoprenoid biosynthesis; isopentenyl diphosphate biosynthesis via DXP pathway; isopentenyl diphosphate from 1-deoxy-D-xylulose 5-phosphate: step 6/6. In terms of biological role, catalyzes the conversion of 1-hydroxy-2-methyl-2-(E)-butenyl 4-diphosphate (HMBPP) into a mixture of isopentenyl diphosphate (IPP) and dimethylallyl diphosphate (DMAPP). Acts in the terminal step of the DOXP/MEP pathway for isoprenoid precursor biosynthesis. This is 4-hydroxy-3-methylbut-2-enyl diphosphate reductase from Polaromonas sp. (strain JS666 / ATCC BAA-500).